The primary structure comprises 508 residues: Photosystem II CP47 reaction center protein (508 aa).

6 consecutive transmembrane segments (helical) span residues 21 to 36 (SVHI…WAGS), 101 to 115 (IVFS…IWHW), 140 to 156 (GIHL…FGAF), 203 to 218 (IAAG…FHLS), 237 to 252 (VLSS…AFVV), and 457 to 472 (SFAL…HGAR).

It belongs to the PsbB/PsbC family. PsbB subfamily. As to quaternary structure, PSII is composed of 1 copy each of membrane proteins PsbA, PsbB, PsbC, PsbD, PsbE, PsbF, PsbH, PsbI, PsbJ, PsbK, PsbL, PsbM, PsbT, PsbX, PsbY, PsbZ, Psb30/Ycf12, at least 3 peripheral proteins of the oxygen-evolving complex and a large number of cofactors. It forms dimeric complexes. It depends on Binds multiple chlorophylls. PSII binds additional chlorophylls, carotenoids and specific lipids. as a cofactor.

Its subcellular location is the plastid. It is found in the chloroplast thylakoid membrane. One of the components of the core complex of photosystem II (PSII). It binds chlorophyll and helps catalyze the primary light-induced photochemical processes of PSII. PSII is a light-driven water:plastoquinone oxidoreductase, using light energy to abstract electrons from H(2)O, generating O(2) and a proton gradient subsequently used for ATP formation. The chain is Photosystem II CP47 reaction center protein from Ipomoea purpurea (Common morning glory).